Reading from the N-terminus, the 580-residue chain is tRNA-guanine(15) transglycosylase (580 aa).

D91 acts as the Nucleophile in catalysis. Substrate-binding residues include D126 and A192. Zn(2+)-binding residues include C275, C277, and C280. A PUA domain is found at R504 to E579.

The protein belongs to the archaeosine tRNA-ribosyltransferase family. It depends on Zn(2+) as a cofactor.

The catalysed reaction is guanosine(15) in tRNA + 7-cyano-7-deazaguanine = 7-cyano-7-carbaguanosine(15) in tRNA + guanine. The protein operates within tRNA modification; archaeosine-tRNA biosynthesis. Its function is as follows. Exchanges the guanine residue with 7-cyano-7-deazaguanine (preQ0) at position 15 in the dihydrouridine loop (D-loop) of archaeal tRNAs. This is tRNA-guanine(15) transglycosylase from Thermococcus onnurineus (strain NA1).